A 212-amino-acid polypeptide reads, in one-letter code: Large ribosomal subunit protein uL4 (212 aa).

The protein belongs to the universal ribosomal protein uL4 family. In terms of assembly, part of the 50S ribosomal subunit.

In terms of biological role, one of the primary rRNA binding proteins, this protein initially binds near the 5'-end of the 23S rRNA. It is important during the early stages of 50S assembly. It makes multiple contacts with different domains of the 23S rRNA in the assembled 50S subunit and ribosome. Its function is as follows. Forms part of the polypeptide exit tunnel. In Caulobacter sp. (strain K31), this protein is Large ribosomal subunit protein uL4.